The chain runs to 426 residues: Adenylosuccinate synthetase (426 aa).

Residues glycine 12–lysine 18 and glycine 40–threonine 42 each bind GTP. Aspartate 13 serves as the catalytic Proton acceptor. Mg(2+)-binding residues include aspartate 13 and glycine 40. Residues aspartate 13–lysine 16, asparagine 38–histidine 41, threonine 125, arginine 139, glutamine 221, threonine 236, and arginine 300 contribute to the IMP site. The active-site Proton donor is the histidine 41. Threonine 296–arginine 302 contacts substrate. GTP-binding positions include arginine 302, lysine 328–aspartate 330, and alanine 410–glycine 412.

This sequence belongs to the adenylosuccinate synthetase family. In terms of assembly, homodimer. Mg(2+) serves as cofactor.

It is found in the cytoplasm. It catalyses the reaction IMP + L-aspartate + GTP = N(6)-(1,2-dicarboxyethyl)-AMP + GDP + phosphate + 2 H(+). It functions in the pathway purine metabolism; AMP biosynthesis via de novo pathway; AMP from IMP: step 1/2. In terms of biological role, plays an important role in the de novo pathway of purine nucleotide biosynthesis. Catalyzes the first committed step in the biosynthesis of AMP from IMP. In Syntrophomonas wolfei subsp. wolfei (strain DSM 2245B / Goettingen), this protein is Adenylosuccinate synthetase.